A 592-amino-acid chain; its full sequence is uncharacterized protein (592 aa).

6 helical membrane passes run 12-32, 58-78, 102-122, 191-211, 214-234, and 299-319; these read IWILQTLAITSVVFSFGIFLL, PILFFLLIVAMTLLSVRISLV, MGLFCVIAASSVSAALVSYYL, ISYTILLWGLAGPMIVLGVEI, MMVFLVFGYVIFTTLIAFWLG, and FSGFNLVVSQISVVFPLLIQV. In terms of domain architecture, ABC transmembrane type-1 spans 58–358; sequence PILFFLLIVA…FRSTYDNFAS (301 aa). The 202-residue stretch at 391-592 folds into the ABC transporter domain; it reads VIFKNLSIQN…LQDKGQWQVL (202 aa). ATP is bound at residue 424–431; the sequence is GKSGAGKT.

Belongs to the ABC transporter superfamily.

The protein localises to the cell inner membrane. This is an uncharacterized protein from Haemophilus influenzae (strain ATCC 51907 / DSM 11121 / KW20 / Rd).